We begin with the raw amino-acid sequence, 318 residues long: MRNRKMKVIFFGTPLFAAQVLEFLLQNQVEVVAVISKPDRPKGRSSIPVPTPVKLIAQSYHLPLYQPEVVSSLDFAPVLKNYEADLFVVVAYGEIIKQHLLDMPKRACINLHASLLPKYRGAAPIQRSIIEGEKETGVTIMHMVKKMDAGDMIKKVSVQITSEMTYGELEQALCQIGKHALLEVIKQFDRGEPSRQIQDSHLATFAPKIELEDCELDWNQSAQHLHDLVRGVNPYPGAWCYVKVNGEQKRLKISRTRVIPYPSNCPGTILDSSKGNLKILTGDQALELVEVQLEGKKTMTSEQWIRGMSKNQLKFLVN.

Residue 114 to 117 participates in (6S)-5,6,7,8-tetrahydrofolate binding; it reads SLLP.

The protein belongs to the Fmt family.

It catalyses the reaction L-methionyl-tRNA(fMet) + (6R)-10-formyltetrahydrofolate = N-formyl-L-methionyl-tRNA(fMet) + (6S)-5,6,7,8-tetrahydrofolate + H(+). In terms of biological role, attaches a formyl group to the free amino group of methionyl-tRNA(fMet). The formyl group appears to play a dual role in the initiator identity of N-formylmethionyl-tRNA by promoting its recognition by IF2 and preventing the misappropriation of this tRNA by the elongation apparatus. The protein is Methionyl-tRNA formyltransferase of Protochlamydia amoebophila (strain UWE25).